A 305-amino-acid polypeptide reads, in one-letter code: ATP synthase gamma chain (305 aa).

Belongs to the ATPase gamma chain family. As to quaternary structure, F-type ATPases have 2 components, CF(1) - the catalytic core - and CF(0) - the membrane proton channel. CF(1) has five subunits: alpha(3), beta(3), gamma(1), delta(1), epsilon(1). CF(0) has three main subunits: a, b and c.

It localises to the cell membrane. Produces ATP from ADP in the presence of a proton gradient across the membrane. The gamma chain is believed to be important in regulating ATPase activity and the flow of protons through the CF(0) complex. The chain is ATP synthase gamma chain from Streptomyces avermitilis (strain ATCC 31267 / DSM 46492 / JCM 5070 / NBRC 14893 / NCIMB 12804 / NRRL 8165 / MA-4680).